The chain runs to 355 residues: UDP-N-acetylglucosamine--N-acetylmuramyl-(pentapeptide) pyrophosphoryl-undecaprenol N-acetylglucosamine transferase (355 aa).

Residues Thr-15–Gly-17, Asn-127, Arg-163, Ser-191, Ile-244, Ala-263–Glu-268, and Gln-288 each bind UDP-N-acetyl-alpha-D-glucosamine.

This sequence belongs to the glycosyltransferase 28 family. MurG subfamily.

The protein localises to the cell inner membrane. The catalysed reaction is di-trans,octa-cis-undecaprenyl diphospho-N-acetyl-alpha-D-muramoyl-L-alanyl-D-glutamyl-meso-2,6-diaminopimeloyl-D-alanyl-D-alanine + UDP-N-acetyl-alpha-D-glucosamine = di-trans,octa-cis-undecaprenyl diphospho-[N-acetyl-alpha-D-glucosaminyl-(1-&gt;4)]-N-acetyl-alpha-D-muramoyl-L-alanyl-D-glutamyl-meso-2,6-diaminopimeloyl-D-alanyl-D-alanine + UDP + H(+). It functions in the pathway cell wall biogenesis; peptidoglycan biosynthesis. Cell wall formation. Catalyzes the transfer of a GlcNAc subunit on undecaprenyl-pyrophosphoryl-MurNAc-pentapeptide (lipid intermediate I) to form undecaprenyl-pyrophosphoryl-MurNAc-(pentapeptide)GlcNAc (lipid intermediate II). In Escherichia coli O157:H7, this protein is UDP-N-acetylglucosamine--N-acetylmuramyl-(pentapeptide) pyrophosphoryl-undecaprenol N-acetylglucosamine transferase.